Here is a 213-residue protein sequence, read N- to C-terminus: Orotate phosphoribosyltransferase (213 aa).

Lys26 provides a ligand contact to 5-phospho-alpha-D-ribose 1-diphosphate. Position 34–35 (34–35 (FF)) interacts with orotate. Residues 72-73 (YK), Arg99, Lys100, Lys103, His105, and 124-132 (DDVITAGTA) contribute to the 5-phospho-alpha-D-ribose 1-diphosphate site. The orotate site is built by Thr128 and Arg156.

Belongs to the purine/pyrimidine phosphoribosyltransferase family. PyrE subfamily. Homodimer. Mg(2+) serves as cofactor.

The catalysed reaction is orotidine 5'-phosphate + diphosphate = orotate + 5-phospho-alpha-D-ribose 1-diphosphate. The protein operates within pyrimidine metabolism; UMP biosynthesis via de novo pathway; UMP from orotate: step 1/2. In terms of biological role, catalyzes the transfer of a ribosyl phosphate group from 5-phosphoribose 1-diphosphate to orotate, leading to the formation of orotidine monophosphate (OMP). The sequence is that of Orotate phosphoribosyltransferase from Escherichia coli O157:H7.